A 463-amino-acid polypeptide reads, in one-letter code: L-seryl-tRNA(Sec) selenium transferase (463 aa).

Lys295 carries the post-translational modification N6-(pyridoxal phosphate)lysine.

The protein belongs to the SelA family. In terms of assembly, homodecamer; pentamer of dimers. Binds only one seryl-tRNA(Sec) per dimer. Requires pyridoxal 5'-phosphate as cofactor.

Its subcellular location is the cytoplasm. It carries out the reaction L-seryl-tRNA(Sec) + selenophosphate + H(+) = L-selenocysteinyl-tRNA(Sec) + phosphate. It participates in aminoacyl-tRNA biosynthesis; selenocysteinyl-tRNA(Sec) biosynthesis; selenocysteinyl-tRNA(Sec) from L-seryl-tRNA(Sec) (bacterial route): step 1/1. Converts seryl-tRNA(Sec) to selenocysteinyl-tRNA(Sec) required for selenoprotein biosynthesis. This chain is L-seryl-tRNA(Sec) selenium transferase, found in Shigella dysenteriae serotype 1 (strain Sd197).